The primary structure comprises 669 residues: DNA ligase (669 aa).

NAD(+) contacts are provided by residues 32-36, 81-82, and Glu-113; these read DAEYD and SL. Lys-115 acts as the N6-AMP-lysine intermediate in catalysis. The NAD(+) site is built by Arg-136, Glu-173, Lys-290, and Lys-314. Zn(2+) contacts are provided by Cys-408, Cys-411, Cys-426, and Cys-432. The region spanning 592 to 669 is the BRCT domain; the sequence is AVDSALAGKI…DEQALIEFLK (78 aa).

The protein belongs to the NAD-dependent DNA ligase family. LigA subfamily. Mg(2+) serves as cofactor. Mn(2+) is required as a cofactor.

The enzyme catalyses NAD(+) + (deoxyribonucleotide)n-3'-hydroxyl + 5'-phospho-(deoxyribonucleotide)m = (deoxyribonucleotide)n+m + AMP + beta-nicotinamide D-nucleotide.. DNA ligase that catalyzes the formation of phosphodiester linkages between 5'-phosphoryl and 3'-hydroxyl groups in double-stranded DNA using NAD as a coenzyme and as the energy source for the reaction. It is essential for DNA replication and repair of damaged DNA. This is DNA ligase from Vibrio cholerae serotype O1 (strain ATCC 39315 / El Tor Inaba N16961).